The primary structure comprises 501 residues: Mitogen-activated protein kinase MKC1 (501 aa).

The Protein kinase domain occupies 28–339; sequence FKIVKELGHG…VRDALNHKYL (312 aa). ATP contacts are provided by residues 34–42 and Lys74; that span reads LGHGAYGIV. Asp174 acts as the Proton acceptor in catalysis. A Phosphothreonine modification is found at Thr211. A TXY motif is present at residues 211–213; the sequence is TEY. Tyr213 is modified (phosphotyrosine). A disordered region spans residues 400 to 450; that stretch reads MQKREEQRQEEEEKELLEQQRQFPAQESMDISQTPYNNLETNIGTPQVEDD. A compositionally biased stretch (polar residues) spans 422 to 444; it reads FPAQESMDISQTPYNNLETNIGT.

The protein belongs to the protein kinase superfamily. CMGC Ser/Thr protein kinase family. MAP kinase subfamily. It depends on Mg(2+) as a cofactor. Dually phosphorylated on Thr-211 and Tyr-213, which activates the enzyme.

The enzyme catalyses L-seryl-[protein] + ATP = O-phospho-L-seryl-[protein] + ADP + H(+). The catalysed reaction is L-threonyl-[protein] + ATP = O-phospho-L-threonyl-[protein] + ADP + H(+). Its activity is regulated as follows. Activated by tyrosine and threonine phosphorylation. The polypeptide is Mitogen-activated protein kinase MKC1 (MKC1) (Candida albicans (Yeast)).